The sequence spans 195 residues: Large ribosomal subunit protein bL25 (195 aa).

The protein belongs to the bacterial ribosomal protein bL25 family. CTC subfamily. Part of the 50S ribosomal subunit; part of the 5S rRNA/L5/L18/L25 subcomplex. Contacts the 5S rRNA. Binds to the 5S rRNA independently of L5 and L18.

In terms of biological role, this is one of the proteins that binds to the 5S RNA in the ribosome where it forms part of the central protuberance. This Geobacter metallireducens (strain ATCC 53774 / DSM 7210 / GS-15) protein is Large ribosomal subunit protein bL25.